Consider the following 142-residue polypeptide: Small ribosomal subunit protein bS16 (142 aa).

The tract at residues 88-142 (GAEGTLRQPEGKTPFVAPDNGSVIIPEAITPKAEKAEEAPAEDAAPAEDDAEKAE) is disordered. Residues 126 to 142 (APAEDAAPAEDDAEKAE) are compositionally biased toward acidic residues.

This sequence belongs to the bacterial ribosomal protein bS16 family.

In Kocuria rhizophila (strain ATCC 9341 / DSM 348 / NBRC 103217 / DC2201), this protein is Small ribosomal subunit protein bS16.